A 119-amino-acid chain; its full sequence is UPF0145 protein Ta0182 (119 aa).

Belongs to the UPF0145 family.

This Thermoplasma acidophilum (strain ATCC 25905 / DSM 1728 / JCM 9062 / NBRC 15155 / AMRC-C165) protein is UPF0145 protein Ta0182.